Here is a 390-residue protein sequence, read N- to C-terminus: Tuftelin (390 aa).

Coiled-coil stretches lie at residues 88–126 (DKMIHEKNINQLKSEVQYIQEARNCLQKLREDISSKLDR) and 162–351 (DTCI…IEKQ). A disordered region spans residues 358–390 (STQARAKTENPGSIRISKPPSPKPMPVIRVVET).

Belongs to the tuftelin family. In terms of assembly, interacts with TFIP11. As to expression, expressed in the epidermis (at protein level). Present in the extracellular enamel and is mainly associated with the crystal component.

The protein resides in the secreted. Its function is as follows. Involved in the structural organization of the epidermis. Involved in the mineralization and structural organization of enamel. The sequence is that of Tuftelin (TUFT1) from Homo sapiens (Human).